Here is a 379-residue protein sequence, read N- to C-terminus: Carbamoyl phosphate synthase small chain (379 aa).

The segment at methionine 1–glutamate 188 is CPSase. Residues serine 47, glycine 240, and glycine 242 each contribute to the L-glutamine site. Residues histidine 192–lysine 379 enclose the Glutamine amidotransferase type-1 domain. Cysteine 269 acts as the Nucleophile in catalysis. L-glutamine contacts are provided by leucine 270, glutamine 273, asparagine 311, glycine 313, and phenylalanine 314. Catalysis depends on residues histidine 353 and glutamate 355.

This sequence belongs to the CarA family. As to quaternary structure, composed of two chains; the small (or glutamine) chain promotes the hydrolysis of glutamine to ammonia, which is used by the large (or ammonia) chain to synthesize carbamoyl phosphate. Tetramer of heterodimers (alpha,beta)4.

It catalyses the reaction hydrogencarbonate + L-glutamine + 2 ATP + H2O = carbamoyl phosphate + L-glutamate + 2 ADP + phosphate + 2 H(+). It carries out the reaction L-glutamine + H2O = L-glutamate + NH4(+). The protein operates within amino-acid biosynthesis; L-arginine biosynthesis; carbamoyl phosphate from bicarbonate: step 1/1. It participates in pyrimidine metabolism; UMP biosynthesis via de novo pathway; (S)-dihydroorotate from bicarbonate: step 1/3. In terms of biological role, small subunit of the glutamine-dependent carbamoyl phosphate synthetase (CPSase). CPSase catalyzes the formation of carbamoyl phosphate from the ammonia moiety of glutamine, carbonate, and phosphate donated by ATP, constituting the first step of 2 biosynthetic pathways, one leading to arginine and/or urea and the other to pyrimidine nucleotides. The small subunit (glutamine amidotransferase) binds and cleaves glutamine to supply the large subunit with the substrate ammonia. The polypeptide is Carbamoyl phosphate synthase small chain (Acinetobacter baylyi (strain ATCC 33305 / BD413 / ADP1)).